Here is a 530-residue protein sequence, read N- to C-terminus: Metal transporter Nramp5 (530 aa).

Residues 1-10 are compositionally biased toward polar residues; the sequence is MTGSTVSRQE. The tract at residues 1-53 is disordered; that stretch reads MTGSTVSRQENSPKRPNDSNGEFKRLLVPETSQPEEDELHESPPENQILNVEE. A compositionally biased stretch (basic and acidic residues) spans 11 to 27; that stretch reads NSPKRPNDSNGEFKRLL. Transmembrane regions (helical) follow at residues 65–85, 98–118, 147–167, 179–199, 207–227, 253–273, 299–319, 341–361, 387–407, 429–449, 458–478, and 485–505; these read FSWAKLWKFTGPGFLMSIAFL, AVAGYSLLWLLLWATLMGLLM, ILLWFMAEVALIGADIQEVIG, FLPIWVGVIITSFDCFLISYL, LEGLFAVLIATMALSFAWMFN, AVGVVGCVITPHNVFLHSALV, AALFVSFMINLFVTAVFAKGF, YGGGVFPILYIWGIGLLAAGQ, LSAFITRSFAIVPTMFVAIMF, IPFAVIPLLTMVSNEHIMGVF, LAWTVAVFVMMINGYLLLDFF, and FLVGFLVFGGVVGYISFIIYL.

This sequence belongs to the NRAMP (TC 2.A.55) family.

The protein resides in the membrane. In terms of biological role, seems to be involved in iron uptake. This chain is Metal transporter Nramp5 (NRAMP5), found in Arabidopsis thaliana (Mouse-ear cress).